The following is a 158-amino-acid chain: 2-C-methyl-D-erythritol 2,4-cyclodiphosphate synthase (158 aa).

The a divalent metal cation site is built by D9 and H11. Residues 9-11 and 35-36 each bind 4-CDP-2-C-methyl-D-erythritol 2-phosphate; these read DVH and HS. Position 43 (H43) interacts with a divalent metal cation. 4-CDP-2-C-methyl-D-erythritol 2-phosphate contacts are provided by residues 57-59, 62-66, 133-136, F140, and R143; these read DIG, FPDTD, and TTTE.

Belongs to the IspF family. Homotrimer. A divalent metal cation serves as cofactor.

The enzyme catalyses 4-CDP-2-C-methyl-D-erythritol 2-phosphate = 2-C-methyl-D-erythritol 2,4-cyclic diphosphate + CMP. The protein operates within isoprenoid biosynthesis; isopentenyl diphosphate biosynthesis via DXP pathway; isopentenyl diphosphate from 1-deoxy-D-xylulose 5-phosphate: step 4/6. In terms of biological role, involved in the biosynthesis of isopentenyl diphosphate (IPP) and dimethylallyl diphosphate (DMAPP), two major building blocks of isoprenoid compounds. Catalyzes the conversion of 4-diphosphocytidyl-2-C-methyl-D-erythritol 2-phosphate (CDP-ME2P) to 2-C-methyl-D-erythritol 2,4-cyclodiphosphate (ME-CPP) with a corresponding release of cytidine 5-monophosphate (CMP). The sequence is that of 2-C-methyl-D-erythritol 2,4-cyclodiphosphate synthase from Actinobacillus pleuropneumoniae serotype 5b (strain L20).